The chain runs to 131 residues: uncharacterized protein (131 aa).

This is an uncharacterized protein from Rickettsia conorii (strain ATCC VR-613 / Malish 7).